We begin with the raw amino-acid sequence, 697 residues long: Phenoloxidase 1 (697 aa).

A propeptide spans 1–101 (removed by PPAE1); the sequence is MSDMSGDVVE…PKHQEMATEV (101 aa). Cu cation is bound by residues histidine 217, histidine 221, and histidine 247. N-linked (GlcNAc...) asparagine glycans are attached at residues asparagine 260 and asparagine 313. Glutamate 355 (proton acceptor) is an active-site residue. Residues histidine 370, histidine 374, and histidine 410 each coordinate Cu cation. Asparagine 498 and asparagine 552 each carry an N-linked (GlcNAc...) asparagine glycan. Intrachain disulfides connect cysteine 587–cysteine 631 and cysteine 589–cysteine 638.

Belongs to the tyrosinase family. As to quaternary structure, heterodimer. Cu(2+) serves as cofactor. Activated by the cleavage of the N-terminal propeptide by PPAE1. Expressed in hemocytes.

It is found in the secreted. It catalyses the reaction L-tyrosine + O2 = L-dopaquinone + H2O. The catalysed reaction is 2 L-dopa + O2 = 2 L-dopaquinone + 2 H2O. Its activity is regulated as follows. Activated by a cationic detergent cetyl pyridinium chloride (CPC). Inhibited by phenyl thio-urea (PTU). In terms of biological role, this is a copper-containing oxidase that functions in the formation of pigments such as melanins and other polyphenolic compounds. Catalyzes the rate-limiting conversions of tyrosine to DOPA, DOPA to DOPA-quinone and possibly 5,6 dihydroxyindole to indole-5'6 quinone. Catalyzes the oxidation of 4-methylcatechol. Binds to the surface of hemocytes and is involved in hemocyte melanization. The chain is Phenoloxidase 1 from Spodoptera litura (Asian cotton leafworm).